The sequence spans 265 residues: Thiazole synthase (265 aa).

The Schiff-base intermediate with DXP role is filled by Lys106. Residues Gly167, 193–194 (AG), and 215–216 (NT) each bind 1-deoxy-D-xylulose 5-phosphate. The interval 245–265 (GRIPRRARAEPSSPQLGLVGS) is disordered.

It belongs to the ThiG family. In terms of assembly, homotetramer. Forms heterodimers with either ThiH or ThiS.

The protein localises to the cytoplasm. It carries out the reaction [ThiS sulfur-carrier protein]-C-terminal-Gly-aminoethanethioate + 2-iminoacetate + 1-deoxy-D-xylulose 5-phosphate = [ThiS sulfur-carrier protein]-C-terminal Gly-Gly + 2-[(2R,5Z)-2-carboxy-4-methylthiazol-5(2H)-ylidene]ethyl phosphate + 2 H2O + H(+). It functions in the pathway cofactor biosynthesis; thiamine diphosphate biosynthesis. Catalyzes the rearrangement of 1-deoxy-D-xylulose 5-phosphate (DXP) to produce the thiazole phosphate moiety of thiamine. Sulfur is provided by the thiocarboxylate moiety of the carrier protein ThiS. In vitro, sulfur can be provided by H(2)S. The sequence is that of Thiazole synthase from Methylobacterium sp. (strain 4-46).